Here is a 149-residue protein sequence, read N- to C-terminus: Nucleoside diphosphate kinase (149 aa).

ATP is bound by residues Lys9, Phe57, Arg85, Thr91, Arg102, and Asn112. His115 functions as the Pros-phosphohistidine intermediate in the catalytic mechanism.

This sequence belongs to the NDK family. Homotetramer. The cofactor is Mg(2+).

The protein resides in the cytoplasm. It catalyses the reaction dZDP + ATP = dZTP + ADP. The catalysed reaction is a 2'-deoxyribonucleoside 5'-diphosphate + ATP = a 2'-deoxyribonucleoside 5'-triphosphate + ADP. The enzyme catalyses a ribonucleoside 5'-diphosphate + ATP = a ribonucleoside 5'-triphosphate + ADP. It functions in the pathway purine metabolism. Major role in the synthesis of nucleoside triphosphates other than ATP. The ATP gamma phosphate is transferred to the NDP beta phosphate via a ping-pong mechanism, using a phosphorylated active-site intermediate. Functionally, (Microbial infection) Catalyzes the phosphorylation of dZDP to dZTP, when the bacterium is infected by a phage that produces the substrate for the synthesis of dZTP (2- amino-2'-deoxyadenosine 5'-triphosphate), which is then used by the phage as a DNA polymerase substrate. The polypeptide is Nucleoside diphosphate kinase (Synechococcus elongatus (strain ATCC 33912 / PCC 7942 / FACHB-805) (Anacystis nidulans R2)).